A 183-amino-acid polypeptide reads, in one-letter code: MRVGMGYDVHKLVKDRKLIMGGVEIPYELGLLGHSDADVLLHAIMDALLGAAALGDIGKHFPDTDDRYKGISSIKLLEEVGKKIDEANYIIENIDATIIAQKPKMRPYIDDMRKNIADALKIDVDRVNVKATTEEGLGFTGSGEGISSQAICSLNSVSNYIYGAADMTNCRSDCGGCMGCQNK.

A divalent metal cation is bound by residues aspartate 8 and histidine 10. 4-CDP-2-C-methyl-D-erythritol 2-phosphate-binding positions include aspartate 8 to histidine 10 and histidine 34 to serine 35. An a divalent metal cation-binding site is contributed by histidine 42. Residues aspartate 56–glycine 58, phenylalanine 61–aspartate 65, threonine 132–glutamate 135, and phenylalanine 139 each bind 4-CDP-2-C-methyl-D-erythritol 2-phosphate.

Belongs to the IspF family. In terms of assembly, homotrimer. A divalent metal cation is required as a cofactor.

It carries out the reaction 4-CDP-2-C-methyl-D-erythritol 2-phosphate = 2-C-methyl-D-erythritol 2,4-cyclic diphosphate + CMP. It functions in the pathway isoprenoid biosynthesis; isopentenyl diphosphate biosynthesis via DXP pathway; isopentenyl diphosphate from 1-deoxy-D-xylulose 5-phosphate: step 4/6. Involved in the biosynthesis of isopentenyl diphosphate (IPP) and dimethylallyl diphosphate (DMAPP), two major building blocks of isoprenoid compounds. Catalyzes the conversion of 4-diphosphocytidyl-2-C-methyl-D-erythritol 2-phosphate (CDP-ME2P) to 2-C-methyl-D-erythritol 2,4-cyclodiphosphate (ME-CPP) with a corresponding release of cytidine 5-monophosphate (CMP). The sequence is that of 2-C-methyl-D-erythritol 2,4-cyclodiphosphate synthase from Lachnospira eligens (strain ATCC 27750 / DSM 3376 / VPI C15-48 / C15-B4) (Eubacterium eligens).